The primary structure comprises 319 residues: Ubiquinone biosynthesis protein COQ4, mitochondrial (319 aa).

The N-terminal 28 residues, 1–28 (MISRSIFSKSVSLQRSQNRSFLLTAASA), are a transit peptide targeting the mitochondrion. The Zn(2+) site is built by H205, D206, H209, and E221.

Belongs to the COQ4 family. In terms of assembly, component of a multi-subunit COQ enzyme complex, composed of at least COQ3, COQ4, COQ5, COQ6, COQ7 and COQ9. Zn(2+) serves as cofactor.

It localises to the mitochondrion inner membrane. The catalysed reaction is a 4-hydroxy-3-methoxy-5-(all-trans-polyprenyl)benzoate + H(+) = a 2-methoxy-6-(all-trans-polyprenyl)phenol + CO2. It functions in the pathway cofactor biosynthesis; ubiquinone biosynthesis. Functionally, lyase that catalyzes the C1-decarboxylation of 4-hydroxy-3-methoxy-5-(all-trans-polyprenyl)benzoic acid into 2-methoxy-6-(all-trans-polyprenyl)phenol during ubiquinone biosynthesis. This chain is Ubiquinone biosynthesis protein COQ4, mitochondrial, found in Clavispora lusitaniae (strain ATCC 42720) (Yeast).